The primary structure comprises 647 residues: DNA ligase (647 aa).

NAD(+)-binding positions include 30 to 34 (DEEYD), 79 to 80 (SM), and glutamate 105. Residue lysine 107 is the N6-AMP-lysine intermediate of the active site. NAD(+) is bound by residues arginine 128, glutamate 162, and lysine 301. Residues cysteine 395, cysteine 398, cysteine 411, and cysteine 416 each coordinate Zn(2+). A BRCT domain is found at 570 to 647 (KSDGVIFGKT…ESAFNELVKE (78 aa)).

Belongs to the NAD-dependent DNA ligase family. LigA subfamily. Mg(2+) serves as cofactor. Requires Mn(2+) as cofactor.

The catalysed reaction is NAD(+) + (deoxyribonucleotide)n-3'-hydroxyl + 5'-phospho-(deoxyribonucleotide)m = (deoxyribonucleotide)n+m + AMP + beta-nicotinamide D-nucleotide.. Functionally, DNA ligase that catalyzes the formation of phosphodiester linkages between 5'-phosphoryl and 3'-hydroxyl groups in double-stranded DNA using NAD as a coenzyme and as the energy source for the reaction. It is essential for DNA replication and repair of damaged DNA. This chain is DNA ligase, found in Campylobacter jejuni subsp. jejuni serotype O:6 (strain 81116 / NCTC 11828).